Here is a 365-residue protein sequence, read N- to C-terminus: Putative agmatine deiminase (365 aa).

Cys357 (amidino-cysteine intermediate) is an active-site residue.

It belongs to the agmatine deiminase family.

It catalyses the reaction agmatine + H2O = N-carbamoylputrescine + NH4(+). This Yersinia pseudotuberculosis serotype O:1b (strain IP 31758) protein is Putative agmatine deiminase.